We begin with the raw amino-acid sequence, 227 residues long: PKHD-type hydroxylase Pden_4677 (227 aa).

Residues 78–178 (HILPPMFNRY…RWASFFWAQS (101 aa)) form the Fe2OG dioxygenase domain. Residues H96, D98, and H159 each contribute to the Fe cation site. R169 contacts 2-oxoglutarate.

It depends on Fe(2+) as a cofactor. The cofactor is L-ascorbate.

The chain is PKHD-type hydroxylase Pden_4677 from Paracoccus denitrificans (strain Pd 1222).